A 103-amino-acid polypeptide reads, in one-letter code: Pyrimidine/purine nucleoside phosphorylase (103 aa).

This sequence belongs to the nucleoside phosphorylase PpnP family.

The catalysed reaction is a purine D-ribonucleoside + phosphate = a purine nucleobase + alpha-D-ribose 1-phosphate. It carries out the reaction adenosine + phosphate = alpha-D-ribose 1-phosphate + adenine. The enzyme catalyses cytidine + phosphate = cytosine + alpha-D-ribose 1-phosphate. It catalyses the reaction guanosine + phosphate = alpha-D-ribose 1-phosphate + guanine. The catalysed reaction is inosine + phosphate = alpha-D-ribose 1-phosphate + hypoxanthine. It carries out the reaction thymidine + phosphate = 2-deoxy-alpha-D-ribose 1-phosphate + thymine. The enzyme catalyses uridine + phosphate = alpha-D-ribose 1-phosphate + uracil. It catalyses the reaction xanthosine + phosphate = alpha-D-ribose 1-phosphate + xanthine. Catalyzes the phosphorolysis of diverse nucleosides, yielding D-ribose 1-phosphate and the respective free bases. Can use uridine, adenosine, guanosine, cytidine, thymidine, inosine and xanthosine as substrates. Also catalyzes the reverse reactions. This chain is Pyrimidine/purine nucleoside phosphorylase, found in Nocardia farcinica (strain IFM 10152).